A 210-amino-acid polypeptide reads, in one-letter code: Somatotropin (210 aa).

A signal peptide spans 1–22; sequence MGQVFLLMPVLLVSCFLSQGAA. H38 contacts Zn(2+). A disulfide bond links C71 and C183. Residue E192 coordinates Zn(2+). C200 and C208 are disulfide-bonded.

Belongs to the somatotropin/prolactin family.

The protein localises to the secreted. Functionally, growth hormone plays an important role in growth control and is involved in the regulation of several anabolic processes. Implicated as an osmoregulatory substance important for seawater adaptation. The protein is Somatotropin (gh) of Oncorhynchus tshawytscha (Chinook salmon).